Reading from the N-terminus, the 543-residue chain is Chaperonin GroEL (543 aa).

ATP contacts are provided by residues 29 to 32, 86 to 90, glycine 413, 476 to 478, and aspartate 492; these read TLGP, DGTTT, and NAA.

This sequence belongs to the chaperonin (HSP60) family. As to quaternary structure, forms a cylinder of 14 subunits composed of two heptameric rings stacked back-to-back. Interacts with the co-chaperonin GroES.

Its subcellular location is the cytoplasm. It catalyses the reaction ATP + H2O + a folded polypeptide = ADP + phosphate + an unfolded polypeptide.. In terms of biological role, together with its co-chaperonin GroES, plays an essential role in assisting protein folding. The GroEL-GroES system forms a nano-cage that allows encapsulation of the non-native substrate proteins and provides a physical environment optimized to promote and accelerate protein folding. The chain is Chaperonin GroEL from Brevibacillus choshinensis.